The chain runs to 391 residues: Probable acridone synthase 4 (391 aa).

Cys-164 is a catalytic residue.

Belongs to the thiolase-like superfamily. Chalcone/stilbene synthases family.

The catalysed reaction is N-methylanthraniloyl-CoA + 3 malonyl-CoA + 3 H(+) = 1,3-dihydroxy-N-methylacridone + 3 CO2 + 4 CoA + H2O. The sequence is that of Probable acridone synthase 4 (ACS4) from Ruta graveolens (Common rue).